We begin with the raw amino-acid sequence, 285 residues long: Phosphatidylserine decarboxylase proenzyme (285 aa).

Residues Asp96, His152, and Ser250 each act as charge relay system; for autoendoproteolytic cleavage activity in the active site. Catalysis depends on Ser250, which acts as the Schiff-base intermediate with substrate; via pyruvic acid; for decarboxylase activity. Ser250 carries the pyruvic acid (Ser); by autocatalysis modification.

The protein belongs to the phosphatidylserine decarboxylase family. PSD-B subfamily. Prokaryotic type I sub-subfamily. Heterodimer of a large membrane-associated beta subunit and a small pyruvoyl-containing alpha subunit. Pyruvate serves as cofactor. In terms of processing, is synthesized initially as an inactive proenzyme. Formation of the active enzyme involves a self-maturation process in which the active site pyruvoyl group is generated from an internal serine residue via an autocatalytic post-translational modification. Two non-identical subunits are generated from the proenzyme in this reaction, and the pyruvate is formed at the N-terminus of the alpha chain, which is derived from the carboxyl end of the proenzyme. The autoendoproteolytic cleavage occurs by a canonical serine protease mechanism, in which the side chain hydroxyl group of the serine supplies its oxygen atom to form the C-terminus of the beta chain, while the remainder of the serine residue undergoes an oxidative deamination to produce ammonia and the pyruvoyl prosthetic group on the alpha chain. During this reaction, the Ser that is part of the protease active site of the proenzyme becomes the pyruvoyl prosthetic group, which constitutes an essential element of the active site of the mature decarboxylase.

The protein resides in the cell membrane. It catalyses the reaction a 1,2-diacyl-sn-glycero-3-phospho-L-serine + H(+) = a 1,2-diacyl-sn-glycero-3-phosphoethanolamine + CO2. Its pathway is phospholipid metabolism; phosphatidylethanolamine biosynthesis; phosphatidylethanolamine from CDP-diacylglycerol: step 2/2. Functionally, catalyzes the formation of phosphatidylethanolamine (PtdEtn) from phosphatidylserine (PtdSer). This Acinetobacter baylyi (strain ATCC 33305 / BD413 / ADP1) protein is Phosphatidylserine decarboxylase proenzyme.